The primary structure comprises 826 residues: MWPQPHLPTHPHLPTHPHLPTHPHLPTHPMMSKETRQSKLAEAKEQLTDHHPQTNPSVGTAASDTKKKKINNGTNPETTTSGGCHSPEDEQKASHQHQEALRRELEAQVHTIRILTCQKTELQMALYYSQHAVKQLEGEARDLISRLHDSWKFAGELEQALSAVATQKKKADRYIEELTKERDALSLELYRNTITDEELKEKNAKLQEKLQLVESEKSEIQLNVKELKRKLERAKLLLPQQQLQAEADHLGKELQSVSAKLQAQVEENELWNRLNQQQEEKMWRQEEKIQEREEKIQEQEEKIREQEEKMRRQEEMMWEKEEKMRRQEEMMWEKEEKIRELEEKMHEQEKIREQEEKRQEEEKIREQEKRQEQEAKMWRQEEKIREQEEKIREQEKKMWRQEEKIHEQEKIREEEKRQEQEEMWRQEEKIREQEEIWRQKEKMHEQEEKIRKQEEKVWRQEEKMHDQEEKIREQEEKVWRQEEKIREQEEKMWRQEEKIREQEEMWREEEKMHEQEKIWEEEKRQEQEDKMWRQEEKIREQEEKVWRQEEKIREQEEKRQEQEEKMWKQEEKIREQEEKIREQEKIREQEEKIREQEEMMQEQEEKMGEQEEKMQEQEKMRRQEEKIREQEEKIREQKEKIREQEEKIWEQEEKIREQEEMMQEQEEKMGEQEEKMWEQEEEMQEQEEKMRRQEEKIREQEKKIREQEEKIREQEEMMQEQEEKMGEQEGKMCEQEAKMQEQEEKMRRQEEKIREQEKKIREQEEKIREQEEMMQEQEEKMWEQEEKMCEQEEKMQEQEEKMRRQEEKMREQEVRLRQQEEKMQEH.

Disordered regions lie at residues 1 to 100 (MWPQ…HQEA), 297 to 327 (QEQE…MRRQ), 345 to 425 (MHEQ…EMWR), 502 to 534 (QEEM…MWRQ), 547 to 646 (RQEE…EQEE), and 658 to 826 (QEEM…MQEH). A compositionally biased stretch (basic and acidic residues) spans 31–52 (MSKETRQSKLAEAKEQLTDHHP). Polar residues-rich tracts occupy residues 53–63 (QTNPSVGTAAS) and 71–83 (NNGT…TSGG). Over residues 86–100 (SPEDEQKASHQHQEA) the composition is skewed to basic and acidic residues. Residues 157-822 (LEQALSAVAT…EVRLRQQEEK (666 aa)) are a coiled coil. Basic and acidic residues-rich tracts occupy residues 658 to 678 (QEEM…KMWE) and 686 to 826 (QEEK…MQEH).

It belongs to the GOLGA6 family.

The protein is Golgin subfamily A member 6-like protein 25 of Homo sapiens (Human).